Reading from the N-terminus, the 171-residue chain is MEIILIKPVRKLGKIGDILKVADGFGRNYLLPQKLAIRATEPNKELIVKQKHEFEAKDKQIREEVEKINALIKDQQLVFIRQTSNDGKLFGSVTNKEIADKLSENISYNISHSNIILDKQIKSTGIYTVEIRLHAELNAIVTVIVARSESEAQDYLREQKTETSEDLAELA.

Belongs to the bacterial ribosomal protein bL9 family.

In terms of biological role, binds to the 23S rRNA. This is Large ribosomal subunit protein bL9 from Rickettsia conorii (strain ATCC VR-613 / Malish 7).